Reading from the N-terminus, the 505-residue chain is Putative thymidine phosphorylase (505 aa).

It belongs to the thymidine/pyrimidine-nucleoside phosphorylase family. Type 2 subfamily.

It carries out the reaction thymidine + phosphate = 2-deoxy-alpha-D-ribose 1-phosphate + thymine. This chain is Putative thymidine phosphorylase, found in Parvibaculum lavamentivorans (strain DS-1 / DSM 13023 / NCIMB 13966).